The following is a 479-amino-acid chain: Sulfate adenylyltransferase subunit 1 (479 aa).

In terms of domain architecture, tr-type G spans 25-239 (KSLLRFLTCG…EVLETVDIQR (215 aa)). The G1 stretch occupies residues 34-41 (GSVDDGKS). 34 to 41 (GSVDDGKS) serves as a coordination point for GTP. The G2 stretch occupies residues 92 to 96 (GITID). A G3 region spans residues 113–116 (DTPG). Residues 113 to 117 (DTPGH) and 168 to 171 (NKMD) contribute to the GTP site. Residues 168–171 (NKMD) are G4. The segment at 206 to 208 (SAL) is G5.

It belongs to the TRAFAC class translation factor GTPase superfamily. Classic translation factor GTPase family. CysN/NodQ subfamily. Heterodimer composed of CysD, the smaller subunit, and CysN.

The enzyme catalyses sulfate + ATP + H(+) = adenosine 5'-phosphosulfate + diphosphate. The protein operates within sulfur metabolism; hydrogen sulfide biosynthesis; sulfite from sulfate: step 1/3. In terms of biological role, with CysD forms the ATP sulfurylase (ATPS) that catalyzes the adenylation of sulfate producing adenosine 5'-phosphosulfate (APS) and diphosphate, the first enzymatic step in sulfur assimilation pathway. APS synthesis involves the formation of a high-energy phosphoric-sulfuric acid anhydride bond driven by GTP hydrolysis by CysN coupled to ATP hydrolysis by CysD. This is Sulfate adenylyltransferase subunit 1 from Salmonella dublin (strain CT_02021853).